A 217-amino-acid polypeptide reads, in one-letter code: Homologous-pairing protein 2 homolog (217 aa).

Positions 93–153 (IVALTAKVQS…LKNIKAATNH (61 aa)) form a coiled coil. Positions 118-182 (SSALTTPEMQ…WRKRKRMATE (65 aa)) are DNA-binding.

The protein belongs to the HOP2 family. Interacts with the DNA-binding domain of the nuclear receptors NR3C1/GR, ESR2/ER-beta, THRB and RXRA. Forms a stable heterodimer with MND1. Interacts with PSMC3/TBP1. PTM: Phosphorylated by PKA, PKC and MAPK. As to expression, highly expressed in testis and colon.

The protein resides in the nucleus. In terms of biological role, plays an important role in meiotic recombination. Stimulates DMC1-mediated strand exchange required for pairing homologous chromosomes during meiosis. The complex PSMC3IP/MND1 binds DNA, stimulates the recombinase activity of DMC1 as well as DMC1 D-loop formation from double-strand DNA. This complex stabilizes presynaptic RAD51 and DMC1 filaments formed on single strand DNA to capture double-strand DNA. This complex stimulates both synaptic and presynaptic critical steps in RAD51 and DMC1-promoted homologous pairing. May inhibit HIV-1 viral protein TAT activity and modulate the activity of proteasomes through association with PSMC3. Acts as a tissue specific coactivator of hormone-dependent transcription mediated by nuclear receptors. The protein is Homologous-pairing protein 2 homolog (PSMC3IP) of Homo sapiens (Human).